Consider the following 115-residue polypeptide: Large ribosomal subunit protein bL19 (115 aa).

Belongs to the bacterial ribosomal protein bL19 family.

In terms of biological role, this protein is located at the 30S-50S ribosomal subunit interface and may play a role in the structure and function of the aminoacyl-tRNA binding site. The chain is Large ribosomal subunit protein bL19 from Yersinia pseudotuberculosis serotype O:1b (strain IP 31758).